A 455-amino-acid chain; its full sequence is MPPQVIQQQQQSLASEMTARDRLTSYIYEYLQQTGASKTAETFKEEVLSTNPAAGLAAANSTKLSDKSFLLEWWLLFWDLYSAAPERRDAGGDPFSAEAKYFHEAMIGMPPGMNGHFAPPPMGMEMMGGHPGAFGGRFAPGRMPPGAMAPGGMPPGAFPMFPPDPRLQRMAPNQGMRMPPPPVGQPFPGAVGMPRPVGPGAPMDMSGMQRFDFMGGPPPGGGAQPFPGASGSGGMMPNGAHPHMSLNSPSMGVPPADMPPFMGMPPMPPTSSSAMPFGMSSDHQPMSAGPAAAAPGATTAGGPGTPGMIGSVPGPGSVPQVATTSVGSVGTPSSIGQQLHQPKQEITTNGEEIMKTEALTPTGGGGGGSVPPPPPAATAAVSMNGGGPGSAPGSAHSVNNNVNPGTPGSNPLSNPMSNPPLSSGPPPPGSNDAFGKDDNGEISKIREGLLDGFCA.

One can recognise a LisH domain in the interval 19-51 (ARDRLTSYIYEYLQQTGASKTAETFKEEVLSTN). 4 disordered regions span residues 217–249 (PPPG…LNSP), 281–302 (SDHQ…TAGG), 314–343 (GPGS…HQPK), and 357–442 (EALT…NGEI). 2 stretches are compositionally biased toward low complexity: residues 288–298 (AGPAAAAPGAT) and 321–336 (VATT…SSIG). Polar residues predominate over residues 396–406 (HSVNNNVNPGT). Residues 407–421 (PGSNPLSNPMSNPPL) show a composition bias toward low complexity.

As to expression, ubiquitously expressed with higher expression in the head and tail ganglia, the vulva and PLM neurons.

The protein localises to the cytoplasm. It is found in the nucleus. Its function is as follows. Involved cell autonomously in PLM neuron pre-synaptic differentiation by negatively regulating prk-2 expression and in neurite branch positioning. In Caenorhabditis elegans, this protein is Single-stranded DNA-binding protein homolog sam-10.